The sequence spans 151 residues: 6,7-dimethyl-8-ribityllumazine synthase (151 aa).

5-amino-6-(D-ribitylamino)uracil-binding positions include F15, 47-49, and 71-73; these read TFE and AVI. 76 to 77 is a binding site for (2S)-2-hydroxy-3-oxobutyl phosphate; sequence ET. H79 (proton donor) is an active-site residue. A 5-amino-6-(D-ribitylamino)uracil-binding site is contributed by L104. Residue R119 participates in (2S)-2-hydroxy-3-oxobutyl phosphate binding.

The protein belongs to the DMRL synthase family.

The catalysed reaction is (2S)-2-hydroxy-3-oxobutyl phosphate + 5-amino-6-(D-ribitylamino)uracil = 6,7-dimethyl-8-(1-D-ribityl)lumazine + phosphate + 2 H2O + H(+). It participates in cofactor biosynthesis; riboflavin biosynthesis; riboflavin from 2-hydroxy-3-oxobutyl phosphate and 5-amino-6-(D-ribitylamino)uracil: step 1/2. Catalyzes the formation of 6,7-dimethyl-8-ribityllumazine by condensation of 5-amino-6-(D-ribitylamino)uracil with 3,4-dihydroxy-2-butanone 4-phosphate. This is the penultimate step in the biosynthesis of riboflavin. The protein is 6,7-dimethyl-8-ribityllumazine synthase of Metallosphaera sedula (strain ATCC 51363 / DSM 5348 / JCM 9185 / NBRC 15509 / TH2).